We begin with the raw amino-acid sequence, 484 residues long: MNGALDHSDQPDPDAIKTFVGQIPRSWSEKELKELFEPYGAVYQINVLRDRSQNPPQSKGCCFVTFYTRKAALEAQNALHNIKTLPGMHHPIQMKPADSEKSNAVEDRKLFIGMVSKKCNENDIRVMFSPFGQIEECRILRGPDGLSRGCAFVTFSTRAMAQNAIKAMHQSQTMEGCSSPIVVKFADTQKDKEQRRLQQQLAQQMQQLNTATWGNLTGLGGLTPQYLALLQQATSSSNLGAFSGIQQMAGMNALQLQNLATLAAAAAAAQTSATTTNANPLSTTTGALGALTSPVAASTANSTAGAAMNSLTSLGTLQGLAGATVGLNNINALAGMAALNGGLGATGLTNGTAGTMDALTQAYSGIQQYAAAALPTLYSQSLLQQQSAAGSQKEGPEGANLFIYHLPQEFGDQDILQMFMPFGNVISAKVFIDKQTNLSKCFGFVSYDNPVSAQAAIQAMNGFQIGMKRLKVQLKRSKNDSKPY.

Necessary for nuclear export regions lie at residues 1–89 (MNGA…PGMH) and 90–178 (HPIQ…EGCS). RRM domains lie at 16 to 99 (IKTF…PADS), 108 to 188 (RKLF…FADT), and 399 to 477 (ANLF…LKRS). The interval 188–240 (TQKDKEQRRLQQQLAQQMQQLNTATWGNLTGLGGLTPQYLALLQQATSSSNLG) is necessary for splicing activity. Residues 347 to 399 (GLTNGTAGTMDALTQAYSGIQQYAAAALPTLYSQSLLQQQSAAGSQKEGPEGA) are necessary for nuclear localization. The necessary for nuclear localization and splicing activity stretch occupies residues 426–484 (ISAKVFIDKQTNLSKCFGFVSYDNPVSAQAAIQAMNGFQIGMKRLKVQLKRSKNDSKPY).

It belongs to the CELF/BRUNOL family. As to expression, expressed in heart.

The protein resides in the nucleus. It is found in the cytoplasm. Its function is as follows. RNA-binding protein implicated in the regulation of several post-transcriptional events. May be involved in mRNA translation repression and stability. Mediates exon inclusion in TNNT2 pre-mRNA. This is CUGBP Elav-like family member 2 (CELF2) from Gallus gallus (Chicken).